The primary structure comprises 451 residues: uncharacterized protein (451 aa).

The region spanning 2–60 (NLKVKQKIPLKIKRMGINGEGIGFYQKTLVFVPGALKGEDIYCQITSIRRNFVEAKLLK) is the TRAM domain. Cysteine 73, cysteine 79, cysteine 82, and cysteine 162 together coordinate [4Fe-4S] cluster. S-adenosyl-L-methionine-binding residues include glutamine 283, tyrosine 312, aspartate 333, and aspartate 381. Cysteine 408 serves as the catalytic Nucleophile.

The protein belongs to the class I-like SAM-binding methyltransferase superfamily. RNA M5U methyltransferase family.

This is an uncharacterized protein from Streptococcus pneumoniae serotype 4 (strain ATCC BAA-334 / TIGR4).